Consider the following 612-residue polypeptide: Netrin unc-6 (612 aa).

The first 21 residues, 1–21 (MITSVLRYVLALYFCMGIAHG), serve as a signal peptide directing secretion. Residues 43 to 290 (RPVRCVPEFI…SMGELAVGGR (248 aa)) form the Laminin N-terminal domain. N114, N128, and N268 each carry an N-linked (GlcNAc...) asparagine glycan. C117 and C149 are oxidised to a cystine. 14 disulfide bridges follow: C291–C300, C293–C310, C312–C321, C324–C344, C347–C356, C349–C374, C377–C386, C389–C407, C410–C422, C412–C429, C431–C440, C443–C457, C478–C547, and C494–C604. Laminin EGF-like domains lie at 291–346 (CKCN…SCVA), 347–409 (CNCN…ACKS), and 410–459 (CGCH…PCIK). The N-linked (GlcNAc...) asparagine glycan is linked to N368. Residue N423 is glycosylated (N-linked (GlcNAc...) asparagine). The NTR domain occupies 478–604 (CSKCRIVPKR…FSKKDKLGQC (127 aa)). N564 is a glycosylation site (N-linked (GlcNAc...) asparagine).

As to quaternary structure, binds to unc-5 and unc-40 receptors.

It localises to the secreted. The protein resides in the extracellular space. It is found in the extracellular matrix. The protein localises to the basement membrane. Component of an extracellular matrix cue that guides dorsoventral migrations on the epidermis. Required for the guidance of pioneer axons and migrating cells along the body wall. In particular, it is required for the guidance of axons from neurons, including SubL neurons and AIY interneurons, into the nerve ring. During gonad morphogenesis, involved in distal tip cell (DTC) migration from the dorsal side of the hermaphrodite body to the midbody to allow for formation of gonad arms. Its association with either unc-40 or unc-5 receptors will lead to axon attraction or repulsion, respectively. Involved in dendritic morphogenesis; may act by association with unc-40 at the tips of growing dendrites for interaction with unc-5 on the apposing branch to induce mutual repulsion. Involved in the positioning of ray 1, the most anterior ray sensilium, in the male tail. Required for the formation of synapses between the AVA interneurons and the PHB sensory neurons. In Caenorhabditis elegans, this protein is Netrin unc-6.